The primary structure comprises 315 residues: Acetaldehyde dehydrogenase 2 (315 aa).

11 to 14 is a binding site for NAD(+); it reads SGNI. Residue C129 is the Acyl-thioester intermediate of the active site. NAD(+)-binding positions include 160–168 and N290; that span reads SAGPGTRSN.

Belongs to the acetaldehyde dehydrogenase family.

The catalysed reaction is acetaldehyde + NAD(+) + CoA = acetyl-CoA + NADH + H(+). The sequence is that of Acetaldehyde dehydrogenase 2 from Mycobacterium sp. (strain KMS).